Here is a 213-residue protein sequence, read N- to C-terminus: High frequency lysogenization protein HflD homolog (213 aa).

This sequence belongs to the HflD family.

It localises to the cytoplasm. It is found in the cell inner membrane. In Alcanivorax borkumensis (strain ATCC 700651 / DSM 11573 / NCIMB 13689 / SK2), this protein is High frequency lysogenization protein HflD homolog.